A 360-amino-acid polypeptide reads, in one-letter code: Phenylalanine--tRNA ligase alpha subunit (360 aa).

Glu255 is a binding site for Mg(2+).

Belongs to the class-II aminoacyl-tRNA synthetase family. Phe-tRNA synthetase alpha subunit type 1 subfamily. As to quaternary structure, tetramer of two alpha and two beta subunits. It depends on Mg(2+) as a cofactor.

The protein resides in the cytoplasm. It catalyses the reaction tRNA(Phe) + L-phenylalanine + ATP = L-phenylalanyl-tRNA(Phe) + AMP + diphosphate + H(+). The chain is Phenylalanine--tRNA ligase alpha subunit from Rhizorhabdus wittichii (strain DSM 6014 / CCUG 31198 / JCM 15750 / NBRC 105917 / EY 4224 / RW1) (Sphingomonas wittichii).